A 313-amino-acid polypeptide reads, in one-letter code: Ribosomal protein uL3 glutamine methyltransferase (313 aa).

The protein belongs to the protein N5-glutamine methyltransferase family. PrmB subfamily.

It catalyses the reaction L-glutaminyl-[ribosomal protein uL3] + S-adenosyl-L-methionine = N(5)-methyl-L-glutaminyl-[ribosomal protein uL3] + S-adenosyl-L-homocysteine + H(+). Functionally, methylates large ribosomal subunit protein uL3 on a specific glutamine residue. This Pasteurella multocida (strain Pm70) protein is Ribosomal protein uL3 glutamine methyltransferase.